The following is a 326-amino-acid chain: uncharacterized protein (326 aa).

Solcar repeat units follow at residues 20–107, 120–219, and 231–322; these read QDSN…CKKK, LTNT…LREF, and KSNL…VCDS. Helical transmembrane passes span 24–40, 84–104, 126–143, 195–213, 237–254, and 297–316; these read IAFL…RTVV, GLNC…YEAC, LFSG…TYPL, VWPT…FAVY, LTIG…TYPF, and GLAA…WLVY.

This sequence belongs to the mitochondrial carrier (TC 2.A.29) family.

The protein localises to the mitochondrion inner membrane. This is an uncharacterized protein from Saccharomyces cerevisiae (strain ATCC 204508 / S288c) (Baker's yeast).